A 445-amino-acid polypeptide reads, in one-letter code: C-terminal-binding protein 2 (445 aa).

Position 22 is an asymmetric dimethylarginine (arginine 22). Residues serine 106, 186–191 (IGFGRT), aspartate 210, 243–249 (CNLNEHN), 270–272 (AAR), and aspartate 296 contribute to the NAD(+) site. Residue arginine 272 is part of the active site. Residue glutamate 301 is part of the active site. The Proton donor role is filled by histidine 321. Residue 321–324 (HTAW) coordinates NAD(+). Residues 414-445 (THNLPTVAHPSQAPSPNQPTKHGDNREHPNEQ) form a disordered region. Phosphoserine is present on serine 428. Residues 434 to 445 (KHGDNREHPNEQ) are compositionally biased toward basic and acidic residues.

The protein belongs to the D-isomer specific 2-hydroxyacid dehydrogenase family. As to quaternary structure, interacts with the C-terminus of adenovirus E1A protein. Can form homodimers or heterodimers of CTBP1 and CTBP2. Interacts with HIPK2. Interacts with ZNF217, PNN, NRIP1 and WIZ. Interacts with PRDM16; represses white adipose tissue (WAT)-specific genes expression. Interacts with MCRIP1. Isoform 2 is specifically localized in synaptic ribbon (at protein level).

The protein resides in the nucleus. It localises to the synapse. Functionally, corepressor targeting diverse transcription regulators. Functions in brown adipose tissue (BAT) differentiation. Isoform 2 probably acts as a scaffold for specialized synapses. The sequence is that of C-terminal-binding protein 2 (CTBP2) from Bos taurus (Bovine).